Reading from the N-terminus, the 116-residue chain is MSVSFPLSKNLHYRPEGNKLNITIGDLKVGSVEFVRETGCLKSECYYPLKWHEELNSWYRCCDNNCEEDHPVPEGVPFPTRINNNIQTLEWFEEKDTDLTQAITRIWNTYQLLQLN.

This sequence belongs to the mimivirus L15/L51/R83 family.

This is an uncharacterized protein from Acanthamoeba polyphaga mimivirus (APMV).